A 339-amino-acid chain; its full sequence is Phenylalanine--tRNA ligase alpha subunit (339 aa).

Residue E254 coordinates Mg(2+).

This sequence belongs to the class-II aminoacyl-tRNA synthetase family. Phe-tRNA synthetase alpha subunit type 1 subfamily. Tetramer of two alpha and two beta subunits. The cofactor is Mg(2+).

The protein localises to the cytoplasm. The enzyme catalyses tRNA(Phe) + L-phenylalanine + ATP = L-phenylalanyl-tRNA(Phe) + AMP + diphosphate + H(+). The protein is Phenylalanine--tRNA ligase alpha subunit of Clostridium perfringens (strain SM101 / Type A).